Reading from the N-terminus, the 605-residue chain is Apoptosis-inducing factor 3 (605 aa).

The segment at 22 to 45 (KERGKEELSASGKGSPRAYQGNGT) is disordered. Positions 70-165 (AAVCHVKDLE…VKIEKEKVYV (96 aa)) constitute a Rieske domain. 4 residues coordinate [2Fe-2S] cluster: C109, H111, C128, and H131. Residues 201–205 (GAGAA), R235, K240, V270, D467, and W514 contribute to the FAD site.

It belongs to the FAD-dependent oxidoreductase family. In terms of tissue distribution, ubiquitous. Expressed in bone marrow, cerebral cortex, liver, ovary, thymus, thyroid gland and tongue (at protein level).

It is found in the mitochondrion. Its function is as follows. Induces apoptosis through a caspase dependent pathway. Reduces mitochondrial membrane potential. The sequence is that of Apoptosis-inducing factor 3 (AIFM3) from Homo sapiens (Human).